The following is a 235-amino-acid chain: Cytidylate kinase (235 aa).

11 to 19 lines the ATP pocket; the sequence is GPSGVGKST.

This sequence belongs to the cytidylate kinase family. Type 1 subfamily.

It is found in the cytoplasm. The enzyme catalyses CMP + ATP = CDP + ADP. It carries out the reaction dCMP + ATP = dCDP + ADP. The protein is Cytidylate kinase of Syntrophotalea carbinolica (strain DSM 2380 / NBRC 103641 / GraBd1) (Pelobacter carbinolicus).